Consider the following 571-residue polypeptide: Proline--tRNA ligase (571 aa).

Belongs to the class-II aminoacyl-tRNA synthetase family. ProS type 1 subfamily. Homodimer.

The protein resides in the cytoplasm. The enzyme catalyses tRNA(Pro) + L-proline + ATP = L-prolyl-tRNA(Pro) + AMP + diphosphate. In terms of biological role, catalyzes the attachment of proline to tRNA(Pro) in a two-step reaction: proline is first activated by ATP to form Pro-AMP and then transferred to the acceptor end of tRNA(Pro). As ProRS can inadvertently accommodate and process non-cognate amino acids such as alanine and cysteine, to avoid such errors it has two additional distinct editing activities against alanine. One activity is designated as 'pretransfer' editing and involves the tRNA(Pro)-independent hydrolysis of activated Ala-AMP. The other activity is designated 'posttransfer' editing and involves deacylation of mischarged Ala-tRNA(Pro). The misacylated Cys-tRNA(Pro) is not edited by ProRS. The chain is Proline--tRNA ligase from Shewanella putrefaciens (strain CN-32 / ATCC BAA-453).